The sequence spans 390 residues: Tuftelin (390 aa).

Coiled coils occupy residues 88–126 and 162–351; these read DKMI…KLDR and DTHI…IEKQ. S171 bears the Phosphoserine mark.

This sequence belongs to the tuftelin family. Interacts with TFIP11. In terms of tissue distribution, present in the extracellular enamel and is mainly associated with the crystal component.

It is found in the secreted. Its function is as follows. Involved in the structural organization of the epidermis. Involved in the mineralization and structural organization of enamel. The polypeptide is Tuftelin (TUFT1) (Bos taurus (Bovine)).